The following is a 256-amino-acid chain: Deoxyribose-phosphate aldolase (256 aa).

The active-site Proton donor/acceptor is the aspartate 102. Lysine 165 acts as the Schiff-base intermediate with acetaldehyde in catalysis. The active-site Proton donor/acceptor is lysine 197.

The protein belongs to the DeoC/FbaB aldolase family. DeoC type 2 subfamily.

Its subcellular location is the cytoplasm. The catalysed reaction is 2-deoxy-D-ribose 5-phosphate = D-glyceraldehyde 3-phosphate + acetaldehyde. The protein operates within carbohydrate degradation; 2-deoxy-D-ribose 1-phosphate degradation; D-glyceraldehyde 3-phosphate and acetaldehyde from 2-deoxy-alpha-D-ribose 1-phosphate: step 2/2. Functionally, catalyzes a reversible aldol reaction between acetaldehyde and D-glyceraldehyde 3-phosphate to generate 2-deoxy-D-ribose 5-phosphate. The chain is Deoxyribose-phosphate aldolase from Shewanella sp. (strain W3-18-1).